The chain runs to 239 residues: Transcriptional regulatory protein BtsR (239 aa).

The Response regulatory domain maps to 3 to 116; that stretch reads KVLIVDDEPL…RLEKTLARLR (114 aa). D54 carries the post-translational modification 4-aspartylphosphate. In terms of domain architecture, HTH LytTR-type spans 137-239; that stretch reads IPCTGHSRIY…LKSLKEAIGL (103 aa).

Phosphorylated by BtsS.

Member of the two-component regulatory system BtsS/BtsR. BtsR regulates expression of btsT by binding to its promoter region. This chain is Transcriptional regulatory protein BtsR, found in Shigella flexneri.